The following is a 432-amino-acid chain: Transcriptional adapter 3-B (432 aa).

Disordered regions lie at residues 90–124 (HELGTPIKHSKPKKQKLDGKGSHASGPGPGRPKSR) and 275–315 (SPVE…KSLE). Polar residues predominate over residues 293 to 305 (DGASTSPRSQNKP). Residues 335-398 (ADDSEDEVLA…NEVMDAFRKI (64 aa)) adopt a coiled-coil conformation.

This sequence belongs to the NGG1 family.

The protein resides in the nucleus. Functionally, functions as a component of the PCAF complex. The PCAF complex is capable of efficiently acetylating histones in a nucleosomal context. The sequence is that of Transcriptional adapter 3-B (tada3-b) from Xenopus laevis (African clawed frog).